We begin with the raw amino-acid sequence, 325 residues long: Homeobox protein Hox-A1a (325 aa).

The short motif at 187 to 192 (TFDWMK) is the Antp-type hexapeptide element. Disordered stretches follow at residues 194 to 215 (KRNP…PNTV) and 264 to 325 (RMKQ…YPSN). The segment at residues 212–271 (PNTVRTNFTTKQLTELEKEFHFNKYLTRARRVEIAAALQLNETQVKIWFQNRRMKQKKRE) is a DNA-binding region (homeobox). Residues 285 to 300 (SGERNQEKVEDGESEK) show a composition bias toward basic and acidic residues. Over residues 301-317 (SVSAPSTPSPTSSTVSS) the composition is skewed to low complexity.

Belongs to the Antp homeobox family. Labial subfamily.

Its subcellular location is the nucleus. Sequence-specific transcription factor which is part of a developmental regulatory system that provides cells with specific positional identities on the anterior-posterior axis. This is Homeobox protein Hox-A1a (hoxa1a) from Takifugu rubripes (Japanese pufferfish).